Here is a 217-residue protein sequence, read N- to C-terminus: Dihydroflavonol 4-reductase (217 aa).

Residues Lys-27 and Tyr-146 each coordinate NADP(+).

Belongs to the NAD(P)-dependent epimerase/dehydratase family. Dihydroflavonol-4-reductase subfamily.

It carries out the reaction a (2R,3S,4S)-leucoanthocyanidin + NADP(+) = a (2R,3R)-dihydroflavonol + NADPH + H(+). The catalysed reaction is (2S)-flavan-4-ol + NADP(+) = (2S)-flavanone + NADPH + H(+). The protein operates within pigment biosynthesis; anthocyanin biosynthesis. In terms of biological role, bifunctional enzyme involved in flavonoid metabolism. This Medicago sativa (Alfalfa) protein is Dihydroflavonol 4-reductase (DFR1).